Reading from the N-terminus, the 130-residue chain is MKDVVVVVTGLAAMEPLTARRMMVGRTAAETTTTGTWTTVHILASMAARRASMTMTTHLRSRVRRIPTRPPRAPRLSVGGGGGTGTAPPARQASPETATIGTRTIGPSKGRRRRRRRMRRRRRRPVTSSC.

The disordered stretch occupies residues 61–130 (SRVRRIPTRP…RRRRPVTSSC (70 aa)). A compositionally biased stretch (basic residues) spans 109–130 (KGRRRRRRRMRRRRRRPVTSSC).

Interacts with 60S ribosome assembly factors GTPBP4 and MRTO4.

It localises to the nucleus. The protein localises to the nucleolus. Functionally, acts as a late-stage inhibitor of pre-60S ribosome assembly by preventing pre-60S ribosome export from nucleus. The sequence is that of Ribosome biogenesis inhibitor MINAS-60 from Homo sapiens (Human).